Consider the following 151-residue polypeptide: Small ribosomal subunit protein uS15 (151 aa).

A compositionally biased stretch (basic residues) spans 1 to 16 (MPHRSRDKKGRSRSVR). Residues 1–20 (MPHRSRDKKGRSRSVRPAHP) form a disordered region.

The protein belongs to the universal ribosomal protein uS15 family. In terms of assembly, part of the 30S ribosomal subunit.

The protein is Small ribosomal subunit protein uS15 of Pyrobaculum aerophilum (strain ATCC 51768 / DSM 7523 / JCM 9630 / CIP 104966 / NBRC 100827 / IM2).